A 263-amino-acid polypeptide reads, in one-letter code: uncharacterized protein (263 aa).

An ATP-binding site is contributed by 31–38 (GPTGSGKT).

The protein belongs to the CbbQ/NirQ/NorQ/GpvN family.

This is an uncharacterized protein from Staphylococcus aureus (strain bovine RF122 / ET3-1).